A 334-amino-acid chain; its full sequence is Holliday junction branch migration complex subunit RuvB (334 aa).

A large ATPase domain (RuvB-L) region spans residues 4-184 (ADRLIQPQLQ…FGIPLRLEFY (181 aa)). ATP-binding positions include arginine 24, glycine 65, lysine 68, threonine 69, threonine 70, 131-133 (EDY), arginine 174, tyrosine 184, and arginine 221. Residue threonine 69 coordinates Mg(2+). Positions 185–255 (NVKDLSTIVT…VAELALNLLD (71 aa)) are small ATPAse domain (RuvB-S). The head domain (RuvB-H) stretch occupies residues 258–334 (GEGFDYMDRK…YVHFGMIKPE (77 aa)). Arginine 294, arginine 313, and arginine 318 together coordinate DNA.

The protein belongs to the RuvB family. As to quaternary structure, homohexamer. Forms an RuvA(8)-RuvB(12)-Holliday junction (HJ) complex. HJ DNA is sandwiched between 2 RuvA tetramers; dsDNA enters through RuvA and exits via RuvB. An RuvB hexamer assembles on each DNA strand where it exits the tetramer. Each RuvB hexamer is contacted by two RuvA subunits (via domain III) on 2 adjacent RuvB subunits; this complex drives branch migration. In the full resolvosome a probable DNA-RuvA(4)-RuvB(12)-RuvC(2) complex forms which resolves the HJ.

The protein localises to the cytoplasm. It catalyses the reaction ATP + H2O = ADP + phosphate + H(+). Functionally, the RuvA-RuvB-RuvC complex processes Holliday junction (HJ) DNA during genetic recombination and DNA repair, while the RuvA-RuvB complex plays an important role in the rescue of blocked DNA replication forks via replication fork reversal (RFR). RuvA specifically binds to HJ cruciform DNA, conferring on it an open structure. The RuvB hexamer acts as an ATP-dependent pump, pulling dsDNA into and through the RuvAB complex. RuvB forms 2 homohexamers on either side of HJ DNA bound by 1 or 2 RuvA tetramers; 4 subunits per hexamer contact DNA at a time. Coordinated motions by a converter formed by DNA-disengaged RuvB subunits stimulates ATP hydrolysis and nucleotide exchange. Immobilization of the converter enables RuvB to convert the ATP-contained energy into a lever motion, pulling 2 nucleotides of DNA out of the RuvA tetramer per ATP hydrolyzed, thus driving DNA branch migration. The RuvB motors rotate together with the DNA substrate, which together with the progressing nucleotide cycle form the mechanistic basis for DNA recombination by continuous HJ branch migration. Branch migration allows RuvC to scan DNA until it finds its consensus sequence, where it cleaves and resolves cruciform DNA. The chain is Holliday junction branch migration complex subunit RuvB from Shewanella oneidensis (strain ATCC 700550 / JCM 31522 / CIP 106686 / LMG 19005 / NCIMB 14063 / MR-1).